The following is a 683-amino-acid chain: Cyclic nucleotide-gated channel alpha-1 (683 aa).

The Cytoplasmic segment spans residues 1–160; sequence MKTNIINTWH…PSGNMYYNWL (160 aa). A disordered region spans residues 34 to 144; sequence ACSSFSDNDN…PKEKKEEEKK (111 aa). The span at 105 to 144 shows a compositional bias: basic and acidic residues; that stretch reads SKADDKKESKKDPEKKKKKEKEKEKKKEEKPKEKKEEEKK. A helical membrane pass occupies residues 161–182; it reads FCITLPVMYNWTMIIARACFDE. Over 183 to 192 the chain is Extracellular; that stretch reads LQSDYLEYWL. The helical transmembrane segment at 193–213 threads the bilayer; that stretch reads IFDYVSDVVYLADMFVRTRTG. Residues 214 to 238 lie on the Cytoplasmic side of the membrane; it reads YLEQGLLVKDELKLIEKYKANLQFK. Residues 239–257 form a helical membrane-spanning segment; that stretch reads LDVLSVIPTDLLYFKFGWN. The Extracellular segment spans residues 258-262; it reads YPEIR. The helical transmembrane segment at 263–281 threads the bilayer; sequence LNRLLRISRMFEFFQRTET. The Cytoplasmic portion of the chain corresponds to 282–288; the sequence is RTNYPNI. An ion conduction pathway region spans residues 286–394; the sequence is PNIFRISNLV…GNIGSMISNM (109 aa). The chain crosses the membrane as a helical span at residues 289-312; sequence FRISNLVMYIVIIIHWNACVYYSI. Topologically, residues 313 to 335 are extracellular; that stretch reads SKAIGFGNDTWVYPDVNDPEFGR. The N-linked (GlcNAc...) asparagine glycan is linked to N320. Transmembrane regions (helical) follow at residues 336–370 and 371–395; these read LARK…VFVV and VDFL…SNMN. A selectivity filter region spans residues 353–356; it reads TIGE. Positions 396 to 472 are C-linker; that stretch reads AARAEFQSRV…DTLKKVRIFA (77 aa). Over 396-683 the chain is Cytoplasmic; the sequence is AARAEFQSRV…ESEPTESLQG (288 aa). Positions 476–596 are cyclic nucleotide-binding domain; it reads AGLLVELVLK…EEKGRQILMK (121 aa). 4 residues coordinate 3',5'-cyclic GMP: G536, S539, R552, and T553. 3',5'-cyclic AMP-binding residues include R552 and T553. The stretch at 614–668 forms a coiled coil; the sequence is LEEKVTRMEGSVDLLQTRFARILAEYESMQQKLKQRLTKVEKFLKPLIETEFSAL.

The protein belongs to the cyclic nucleotide-gated cation channel (TC 1.A.1.5) family. CNGA1 subfamily. In terms of assembly, forms heterotetrameric channels composed of CNGA1 and CNGB1 subunits with 3:1 stoichiometry. May also form cyclic nucleotide-activated homotetrameric channels, that are efficiently activated by saturating cGMP, but poorly activated by saturating cAMP compared to the heterotetramer with CNGB1. The channel binds Ca(2+)-bound CALM1 via CaM1 and CaM2 regions of the CNGB1 subunit; this interaction modulates the affinity of the channel for cNMPs in response to intracellular Ca(2+) levels. In terms of tissue distribution, rod cells in the retina.

It localises to the cell membrane. It catalyses the reaction Ca(2+)(in) = Ca(2+)(out). The catalysed reaction is Na(+)(in) = Na(+)(out). The enzyme catalyses K(+)(in) = K(+)(out). It carries out the reaction NH4(+)(in) = NH4(+)(out). It catalyses the reaction Rb(+)(in) = Rb(+)(out). The catalysed reaction is Li(+)(in) = Li(+)(out). The enzyme catalyses Cs(+)(in) = Cs(+)(out). Pore-forming subunit of the rod cyclic nucleotide-gated channel. Mediates rod photoresponses at dim light converting transient changes in intracellular cGMP levels into electrical signals. In the dark, cGMP levels are high and keep the channel open enabling a steady inward current carried by Na(+) and Ca(2+) ions that leads to membrane depolarization and neurotransmitter release from synaptic terminals. Upon photon absorption cGMP levels decline leading to channel closure and membrane hyperpolarization that ultimately slows neurotransmitter release and signals the presence of light, the end point of the phototransduction cascade. Conducts cGMP- and cAMP-gated ion currents, with permeability for monovalent and divalent cations. The selectivity for Ca(2+) over Na(+) increases with cGMP concentrations, whereas the selectivity among monovalent ions is independent of the cGMP levels. The sequence is that of Cyclic nucleotide-gated channel alpha-1 from Rattus norvegicus (Rat).